Reading from the N-terminus, the 263-residue chain is Ribosomal RNA large subunit methyltransferase E (263 aa).

Residues glycine 48, tryptophan 50, aspartate 68, aspartate 88, and aspartate 118 each coordinate S-adenosyl-L-methionine. Lysine 158 functions as the Proton acceptor in the catalytic mechanism. Positions 205-263 (PVREGDIVEATIEDIGEEGDGIAKVENFTVFVSGVEDGETVEVRIDDVKPRYAFAEPVE) constitute a TRAM domain.

This sequence belongs to the class I-like SAM-binding methyltransferase superfamily. RNA methyltransferase RlmE family.

It is found in the cytoplasm. It catalyses the reaction uridine(2552) in 23S rRNA + S-adenosyl-L-methionine = 2'-O-methyluridine(2552) in 23S rRNA + S-adenosyl-L-homocysteine + H(+). Functionally, specifically methylates the uridine in position 2552 of 23S rRNA at the 2'-O position of the ribose in the fully assembled 50S ribosomal subunit. The sequence is that of Ribosomal RNA large subunit methyltransferase E from Haloarcula marismortui (strain ATCC 43049 / DSM 3752 / JCM 8966 / VKM B-1809) (Halobacterium marismortui).